The sequence spans 453 residues: Alpha-2B adrenergic receptor (453 aa).

Topologically, residues M1–T17 are extracellular. A helical membrane pass occupies residues A18 to V42. The Cytoplasmic segment spans residues L43–L54. The helical transmembrane segment at F55–L80 threads the bilayer. Residues G81 to C90 lie on the Extracellular side of the membrane. A disulfide bond links C90 and C169. A helical membrane pass occupies residues E91–L113. Residues D114–K135 lie on the Cytoplasmic side of the membrane. A helical transmembrane segment spans residues C136 to D158. Over Q159–E174 the chain is Extracellular. The helical transmembrane segment at A175–L198 threads the bilayer. At R199–V375 the chain is on the cytoplasmic side. The tract at residues G213–Q331 is disordered. Polar residues predominate over residues G287–A297. The segment covering E300–E314 has biased composition (acidic residues). The chain crosses the membrane as a helical span at residues L376–I399. Residues C400–H408 are Extracellular-facing. A helical membrane pass occupies residues G409–F432. The Cytoplasmic portion of the chain corresponds to N433–W453. C445 carries the S-palmitoyl cysteine lipid modification.

It belongs to the G-protein coupled receptor 1 family. Adrenergic receptor subfamily. ADRA2B sub-subfamily. As to quaternary structure, interacts with RAB26. Interacts with PPP1R9B. Interacts with GGA1, GGA2 and GGA3.

It localises to the cell membrane. In terms of biological role, alpha-2 adrenergic receptors mediate the catecholamine-induced inhibition of adenylate cyclase through the action of G proteins. This Rattus norvegicus (Rat) protein is Alpha-2B adrenergic receptor (Adra2b).